Here is a 41-residue protein sequence, read N- to C-terminus: Pi-stichotoxin-Hmg5c (41 aa).

3 cysteine pairs are disulfide-bonded: Cys-4-Cys-37, Cys-6-Cys-30, and Cys-20-Cys-38.

Belongs to the sea anemone type 3 (BDS) potassium channel toxin family.

Its subcellular location is the secreted. It localises to the nematocyst. In terms of biological role, toxin with different activities on acid-sensing ion channels (ASIC) and nicotinic acetylcholine receptors. Is able to bind T.californica muscle-type nicotinic acetylcholine receptors (nAChR) (alpha-1-beta-1-delta-epsilon (CHRNA1-CHRNB1-CHRND-CHRNE)), and human alpha-7/CHRNA7 nicotinic acetylcholine receptors. Weakly and reversibly inhibits rat homomeric ASIC1 (isoform ASIC1a) (IC(50)=1.25 uM), while it potentiates rat homomeric ASIC3 (EC(50)=1.53 uM). Rat ASIC1a current inhibition is not complete, and reaches a maximum of 86% inhibition. On rat ASIC3, does not activate the channel itself, but produces a remarkable potentiation of the transient current resulting from the acidic pulse. At the maximal applied concentration, elicits responses that are twice as high as those produced by extracellular protons. Surprisingly, shows a different activity on human ASIC3. On the truncated human ASIC3 (ASIC3-D20), the toxin weakly inhibits the channel. Molecular modeling interaction with rat ASIC1a suggests that it hinders the collapse of acidic pockets and stabilizes nonconducting channels state. In vivo, causes an anxiolytic effect on mouse behavior. Also shows an analgesic activity in an acid-induced muscle pain model, and important anti-inflammatory effect in models of acute local inflammation. In Heteractis magnifica (Magnificent sea anemone), this protein is Pi-stichotoxin-Hmg5c.